Reading from the N-terminus, the 78-residue chain is U7-lycotoxin-Ls1d (78 aa).

The signal sequence occupies residues 1 to 22 (MKLIIFTGLALLLIVSLIDVEA). Positions 23 to 26 (QNEG) are excised as a propeptide.

This sequence belongs to the neurotoxin 19 (CSTX) family. 07 (U7-Lctx) subfamily. Contains 4 disulfide bonds. As to expression, expressed by the venom gland.

It is found in the secreted. The sequence is that of U7-lycotoxin-Ls1d from Lycosa singoriensis (Wolf spider).